The following is a 442-amino-acid chain: 3-phosphoshikimate 1-carboxyvinyltransferase (442 aa).

3-phosphoshikimate-binding residues include Lys25, Ser26, and Arg30. Lys25 is a phosphoenolpyruvate binding site. Positions 97 and 125 each coordinate phosphoenolpyruvate. Ser170, Gln172, Asp323, and Lys350 together coordinate 3-phosphoshikimate. Phosphoenolpyruvate is bound at residue Gln172. Residue Asp323 is the Proton acceptor of the active site. Residues Arg354 and Arg399 each contribute to the phosphoenolpyruvate site.

It belongs to the EPSP synthase family. In terms of assembly, monomer.

It is found in the cytoplasm. It carries out the reaction 3-phosphoshikimate + phosphoenolpyruvate = 5-O-(1-carboxyvinyl)-3-phosphoshikimate + phosphate. Its pathway is metabolic intermediate biosynthesis; chorismate biosynthesis; chorismate from D-erythrose 4-phosphate and phosphoenolpyruvate: step 6/7. Catalyzes the transfer of the enolpyruvyl moiety of phosphoenolpyruvate (PEP) to the 5-hydroxyl of shikimate-3-phosphate (S3P) to produce enolpyruvyl shikimate-3-phosphate and inorganic phosphate. This chain is 3-phosphoshikimate 1-carboxyvinyltransferase, found in Bartonella henselae (strain ATCC 49882 / DSM 28221 / CCUG 30454 / Houston 1) (Rochalimaea henselae).